The sequence spans 220 residues: CASP-like protein 1E1 (220 aa).

The Cytoplasmic segment spans residues 1 to 57 (METPTPRVKPGFNGVGVGMGSSVNGSSRRAGYYMGPAGAVAVAGGGRAAAAAPVDGC). Residues 58–78 (SVALRVFVLAATLVSAVVMGV) traverse the membrane as a helical segment. Topologically, residues 79-108 (DRQTSTIRITVTDALPPLEVPLTANWSYSS) are extracellular. N-linked (GlcNAc...) asparagine glycosylation occurs at asparagine 103. The helical transmembrane segment at 109-129 (AFVYFVVANAMVCLFSAAALA) threads the bilayer. Residues 130–144 (ACRSRAAMVPVMVGD) are Cytoplasmic-facing. Residues 145 to 165 (LLALALLYSAVGAAAEFGILG) traverse the membrane as a helical segment. Residues 166–187 (ERGNSHVRWPKVCNVYGRFCER) lie on the Extracellular side of the membrane. The helical transmembrane segment at 188 to 208 (AMAAVIVSLIAAFANLVLLML) threads the bilayer. Residues 209-220 (NILTIHKSSSYY) are Cytoplasmic-facing.

The protein belongs to the Casparian strip membrane proteins (CASP) family. As to quaternary structure, homodimer and heterodimers.

Its subcellular location is the cell membrane. The chain is CASP-like protein 1E1 from Zea mays (Maize).